A 292-amino-acid chain; its full sequence is GTP cyclohydrolase FolE2 (292 aa).

This sequence belongs to the GTP cyclohydrolase IV family.

The catalysed reaction is GTP + H2O = 7,8-dihydroneopterin 3'-triphosphate + formate + H(+). It participates in cofactor biosynthesis; 7,8-dihydroneopterin triphosphate biosynthesis; 7,8-dihydroneopterin triphosphate from GTP: step 1/1. Functionally, converts GTP to 7,8-dihydroneopterin triphosphate. The sequence is that of GTP cyclohydrolase FolE2 from Staphylococcus epidermidis (strain ATCC 12228 / FDA PCI 1200).